The primary structure comprises 446 residues: Rhamnogalacturonase A (446 aa).

A signal peptide spans 1 to 18; it reads MPALPILALALAPLLVNG. A disulfide bond links cysteine 39 and cysteine 65. Asparagine 50, asparagine 115, and asparagine 124 each carry an N-linked (GlcNAc...) asparagine glycan. The Proton donor role is filled by aspartate 216. Cysteine 218 and cysteine 235 are joined by a disulfide. Asparagine 236, asparagine 281, and asparagine 318 each carry an N-linked (GlcNAc...) asparagine glycan. Intrachain disulfides connect cysteine 341/cysteine 347 and cysteine 369/cysteine 378.

It belongs to the glycosyl hydrolase 28 family.

Its subcellular location is the secreted. The enzyme catalyses Endohydrolysis of alpha-D-GalA-(1-&gt;2)-alpha-L-Rha glycosidic bond in the rhamnogalacturonan I backbone with initial inversion of anomeric configuration releasing oligosaccharides with beta-D-GalA at the reducing end.. Pectinolytic enzymes consist of four classes of enzymes: pectine lyase, polygalacturonase, pectin methylesterase and rhamnogalacturonase. Hydrolyzes alpha-D-galacturonopyranosyl-(1,2)-alpha-L-rhamnopyranosyl linkages in the backbone of the hairy regions of pectins. This chain is Rhamnogalacturonase A (rhgA), found in Aspergillus niger.